We begin with the raw amino-acid sequence, 187 residues long: UPF0340 protein SPG_0604 (187 aa).

Belongs to the UPF0340 family.

This is UPF0340 protein SPG_0604 from Streptococcus pneumoniae serotype 19F (strain G54).